The primary structure comprises 267 residues: Palmitoyltransferase ZDHHC12 (267 aa).

The Cytoplasmic portion of the chain corresponds to 1–9 (MALWPPLNS). A helical membrane pass occupies residues 10-30 (GMLVRTGHTVLTWGITLVLFL). Residues 31–43 (HDTELRQWEEQGE) are Lumenal-facing. Residues 44 to 64 (LLLPLTFLLLVLSSLLLYLAV) traverse the membrane as a helical segment. At 65 to 140 (SLMDPGYVTT…ENCVGERNHP (76 aa)) the chain is on the cytoplasmic side. The 51-residue stretch at 97-147 (RRCRHCLVLQPLRARHCRDCRRCVRRYDHHCPWMENCVGERNHPLFVAYLA) folds into the DHHC domain. Residue Cys-127 is the S-palmitoyl cysteine intermediate of the active site. A helical transmembrane segment spans residues 141-161 (LFVAYLALQLVVLLWGLCLAW). The Lumenal segment spans residues 162-178 (SGLQFFQPWGLWLRSTG). The chain crosses the membrane as a helical span at residues 179-199 (LLFTTFLLLSFFALVVALLLA). At 200–267 (SHLYLVARNT…EEEEGSSQVV (68 aa)) the chain is on the cytoplasmic side.

The protein belongs to the DHHC palmitoyltransferase family.

The protein localises to the golgi apparatus membrane. The protein resides in the endoplasmic reticulum membrane. It carries out the reaction L-cysteinyl-[protein] + hexadecanoyl-CoA = S-hexadecanoyl-L-cysteinyl-[protein] + CoA. In terms of biological role, palmitoyltransferase that catalyzes the addition of palmitate onto various protein substrates. Has a palmitoyltransferase activity toward gephyrin/GPHN, regulating its clustering at synapses and its function in gamma-aminobutyric acid receptor clustering. Thereby, indirectly regulates GABAergic synaptic transmission. Negatively regulates NLRP3-driven inflammation. Catalyzes NLRP3 palmitoylation, leading to its degradation via the chaperone-mediated autophagy (CMA) process. The sequence is that of Palmitoyltransferase ZDHHC12 from Mus musculus (Mouse).